Consider the following 79-residue polypeptide: Large ribosomal subunit protein uL24 (79 aa).

It belongs to the universal ribosomal protein uL24 family. Part of the 50S ribosomal subunit.

Functionally, one of two assembly initiator proteins, it binds directly to the 5'-end of the 23S rRNA, where it nucleates assembly of the 50S subunit. One of the proteins that surrounds the polypeptide exit tunnel on the outside of the subunit. The polypeptide is Large ribosomal subunit protein uL24 (Aliarcobacter butzleri (strain RM4018) (Arcobacter butzleri)).